A 445-amino-acid chain; its full sequence is Cytoplasmic tRNA 2-thiolation protein 2 (445 aa).

The segment covering 1–11 (MCSIGEDDFGD) has biased composition (acidic residues). Positions 1–26 (MCSIGEDDFGDEGGVHAMKEESPLPE) are disordered. The span at 13–22 (GGVHAMKEES) shows a compositional bias: basic and acidic residues.

Belongs to the CTU2/NCS2 family.

Its subcellular location is the cytoplasm. The protein operates within tRNA modification; 5-methoxycarbonylmethyl-2-thiouridine-tRNA biosynthesis. Functionally, plays a central role in 2-thiolation of mcm(5)S(2)U at tRNA wobble positions of tRNA(Lys), tRNA(Glu) and tRNA(Gln). May act by forming a heterodimer with NCS6/CTU1 that ligates sulfur from thiocarboxylated URM1 onto the uridine of tRNAs at wobble position. The protein is Cytoplasmic tRNA 2-thiolation protein 2 of Aedes aegypti (Yellowfever mosquito).